A 374-amino-acid chain; its full sequence is Putative glutamate--cysteine ligase 2 (374 aa).

It belongs to the glutamate--cysteine ligase type 2 family. YbdK subfamily.

The enzyme catalyses L-cysteine + L-glutamate + ATP = gamma-L-glutamyl-L-cysteine + ADP + phosphate + H(+). ATP-dependent carboxylate-amine ligase which exhibits weak glutamate--cysteine ligase activity. The protein is Putative glutamate--cysteine ligase 2 of Acidovorax sp. (strain JS42).